We begin with the raw amino-acid sequence, 539 residues long: Dihydrolipoyllysine-residue acetyltransferase component 2 of pyruvate dehydrogenase complex, mitochondrial (539 aa).

The N-terminal 102 residues, 1 to 102 (MASRIINHSK…SSQMRSVRGF (102 aa)), are a transit peptide targeting the mitochondrion. Positions 102–122 (FSSSSDLPPHQEIGMPSLSPT) are disordered. The Lipoyl-binding domain maps to 111–187 (HQEIGMPSLS…QVGEVIAITV (77 aa)). Residue lysine 152 is modified to N6-lipoyllysine. The tract at residues 196–244 (FKDYTPSSDTGPAAPEAKPAPSLPKEEKVEKPASAPEAKISKPSSAPSE) is disordered. The region spanning 248–285 (FASPLARKLAEDNNVPLSSIKGTGPEGRIVKADVEDFL) is the Peripheral subunit-binding (PSBD) domain. Catalysis depends on residues histidine 512 and aspartate 516.

The protein belongs to the 2-oxoacid dehydrogenase family. (R)-lipoate is required as a cofactor.

The protein localises to the mitochondrion matrix. The enzyme catalyses N(6)-[(R)-dihydrolipoyl]-L-lysyl-[protein] + acetyl-CoA = N(6)-[(R)-S(8)-acetyldihydrolipoyl]-L-lysyl-[protein] + CoA. The pyruvate dehydrogenase complex catalyzes the overall conversion of pyruvate to acetyl-CoA and CO(2). It contains multiple copies of three enzymatic components: pyruvate dehydrogenase (E1), dihydrolipoamide acetyltransferase (E2) and lipoamide dehydrogenase (E3). This chain is Dihydrolipoyllysine-residue acetyltransferase component 2 of pyruvate dehydrogenase complex, mitochondrial, found in Arabidopsis thaliana (Mouse-ear cress).